The primary structure comprises 130 residues: Translation initiation factor 5A (130 aa).

K36 carries the post-translational modification Hypusine.

Belongs to the eIF-5A family.

Its subcellular location is the cytoplasm. Its function is as follows. Functions by promoting the formation of the first peptide bond. In Methanothermobacter thermautotrophicus (strain ATCC 29096 / DSM 1053 / JCM 10044 / NBRC 100330 / Delta H) (Methanobacterium thermoautotrophicum), this protein is Translation initiation factor 5A (eif5a).